The chain runs to 210 residues: MLLWGRWKLAAGLAGLALSLELFYRYMRRRKPLREVLFFPVPVTCIEPVLSPMKQCSCPLPHTDSAFSRLLVQLLGAQRSLELCVFTFSSPSLARALLILHRRDVRVRVITDNDYMAAPGSQIGPLRSAGVAVRHDQSSGYMHHKFAVVDGTVVLTGSLNWTVQAFQSNKENILITDDTVIVKAYQKEFERLWEEYDPATYNFFPEKENK.

Over 1-5 (MLLWG) the chain is Mitochondrial intermembrane. A helical transmembrane segment spans residues 6–24 (RWKLAAGLAGLALSLELFY). Topologically, residues 25 to 210 (RYMRRRKPLR…YNFFPEKENK (186 aa)) are cytoplasmic. One can recognise a PLD phosphodiesterase domain in the interval 138–165 (SSGYMHHKFAVVDGTVVLTGSLNWTVQA). Catalysis depends on residues H143, K145, and D150.

Belongs to the phospholipase D family. MitoPLD/Zucchini subfamily. Homodimer.

Its subcellular location is the mitochondrion outer membrane. It carries out the reaction a cardiolipin + H2O = a 1,2-diacyl-sn-glycero-3-phospho-(1'-sn-glycerol) + a 1,2-diacyl-sn-glycero-3-phosphate + H(+). Functionally, presents phospholipase and nuclease activities, depending on the different physiological conditions. Plays a key role in mitochondrial fusion and fission via its phospholipase activity. In its phospholipase role, it uses the mitochondrial lipid cardiolipin as substrate to generate phosphatidate (PA or 1,2-diacyl-sn-glycero-3-phosphate), a second messenger signaling lipid. Production of PA facilitates Mitofusin-mediated fusion, whereas the cleavage of PA by the Lipin family of phosphatases produces diacylgycerol (DAG) which promotes mitochondrial fission. Regulates mitochondrial shape through facilitating mitochondrial fusion. During spermatogenesis, plays a critical role in PIWI-interacting RNA (piRNA) biogenesis. piRNAs provide essential protection against the activity of mobile genetic elements. piRNA-mediated transposon silencing is thus critical for maintaining genome stability, in particular in germline cells when transposons are mobilized as a consequence of wide-spread genomic demethylation. Has been shown to be a backbone-non-specific, single strand-specific nuclease, cleaving either RNA or DNA substrates with similar affinity. Produces 5' phosphate and 3' hydroxyl termini, suggesting it could directly participate in the processing of primary piRNA transcripts. Has been proposed to act as a cardiolipin hydrolase to generate phosphatidic acid at mitochondrial surface. Although it cannot be excluded that it can act as a phospholipase in some circumstances, this activity could not be confirmed. In Xenopus laevis (African clawed frog), this protein is Mitochondrial cardiolipin hydrolase (pld6).